A 366-amino-acid chain; its full sequence is D-alanine--D-alanine ligase (366 aa).

Residues 144–347 (KRLLKDAGLK…YRELIENLIE (204 aa)) enclose the ATP-grasp domain. Position 174–229 (174–229 (KEELGLPMFIKPANQGSSVGVHKVENEEQFYSAIKDAFQFDHKLLVEEAIVGREIE)) interacts with ATP. Residues aspartate 301, glutamate 314, and asparagine 316 each coordinate Mg(2+).

It belongs to the D-alanine--D-alanine ligase family. It depends on Mg(2+) as a cofactor. The cofactor is Mn(2+).

The protein localises to the cytoplasm. It catalyses the reaction 2 D-alanine + ATP = D-alanyl-D-alanine + ADP + phosphate + H(+). The protein operates within cell wall biogenesis; peptidoglycan biosynthesis. Its function is as follows. Cell wall formation. In Oceanobacillus iheyensis (strain DSM 14371 / CIP 107618 / JCM 11309 / KCTC 3954 / HTE831), this protein is D-alanine--D-alanine ligase.